Reading from the N-terminus, the 168-residue chain is MAAESLPFTLETVSSWELEAWYEDLQEVLSSDENGGPYSSSLGNEEGESKTFTTLDPASLAWLTEEPGPAEVTSSSQSPRSPDSSQSCMAQEEEEDQGRTRKRKQSGQCPARGTGKQRMKEKEQENERKVAQLAEENERLKQEIERLTREVEATRPGSDRPHVNLQQV.

The segment at 10–18 (LETVSSWEL) is interaction with TRIB3. The segment at 10–26 (LETVSSWELEAWYEDLQ) is N-terminal. A phosphoserine; by CK2 mark is found at Ser14, Ser15, Ser30, and Ser31. Positions 30 to 43 (SSDENGGPYSSSLG) are enriched in polar residues. The disordered stretch occupies residues 30 to 168 (SSDENGGPYS…DRPHVNLQQV (139 aa)). Positions 74–87 (SSSQSPRSPDSSQS) are enriched in low complexity. A phosphoserine; by MAPK14 mark is found at Ser78 and Ser81. One can recognise a bZIP domain in the interval 98 to 161 (GRTRKRKQSG…EATRPGSDRP (64 aa)). A basic motif region spans residues 101 to 129 (RKRKQSGQCPARGTGKQRMKEKEQENERK). Residues 118–162 (RMKEKEQENERKVAQLAEENERLKQEIERLTREVEATRPGSDRPH) show a composition bias toward basic and acidic residues. The segment at 133–147 (LAEENERLKQEIERL) is leucine-zipper.

Belongs to the bZIP family. As to quaternary structure, heterodimer. Interacts with TCF7L2/TCF4, EP300/P300, HDAC1, HDAC5 and HDAC6. Interacts with TRIB3 which blocks its association with EP300/P300. Interacts with FOXO3, CEBPB and ATF4. Post-translationally, ubiquitinated, leading to its degradation by the proteasome. In terms of processing, phosphorylation at serine residues by MAPK14 enhances its transcriptional activation activity while phosphorylation at serine residues by CK2 inhibits its transcriptional activation activity.

It is found in the cytoplasm. The protein resides in the nucleus. Functionally, multifunctional transcription factor in ER stress response. Plays an essential role in the response to a wide variety of cell stresses and induces cell cycle arrest and apoptosis in response to ER stress. Plays a dual role both as an inhibitor of CCAAT/enhancer-binding protein (C/EBP) function and as an activator of other genes. Acts as a dominant-negative regulator of C/EBP-induced transcription: dimerizes with members of the C/EBP family, impairs their association with C/EBP binding sites in the promoter regions, and inhibits the expression of C/EBP regulated genes. Positively regulates the transcription of TRIB3, IL6, IL8, IL23, TNFRSF10B/DR5, PPP1R15A/GADD34, BBC3/PUMA, BCL2L11/BIM and ERO1L. Negatively regulates; expression of BCL2 and MYOD1, ATF4-dependent transcriptional activation of asparagine synthetase (ASNS), CEBPA-dependent transcriptional activation of hepcidin (HAMP) and CEBPB-mediated expression of peroxisome proliferator-activated receptor gamma (PPARG). Inhibits the canonical Wnt signaling pathway by binding to TCF7L2/TCF4, impairing its DNA-binding properties and repressing its transcriptional activity. Plays a regulatory role in the inflammatory response through the induction of caspase-11 (CASP4/CASP11) which induces the activation of caspase-1 (CASP1) and both these caspases increase the activation of pro-IL1B to mature IL1B which is involved in the inflammatory response. In Cricetulus griseus (Chinese hamster), this protein is DNA damage-inducible transcript 3 protein (DDIT3).